Reading from the N-terminus, the 246-residue chain is Probable transcriptional regulatory protein YebC (246 aa).

The tract at residues 1–20 (MAGHSKWANTRHRKAAQDAK) is disordered.

It belongs to the TACO1 family.

The protein resides in the cytoplasm. The polypeptide is Probable transcriptional regulatory protein YebC (Shigella flexneri).